Reading from the N-terminus, the 357-residue chain is Histidinol-phosphate aminotransferase (357 aa).

Lys-212 bears the N6-(pyridoxal phosphate)lysine mark.

It belongs to the class-II pyridoxal-phosphate-dependent aminotransferase family. Histidinol-phosphate aminotransferase subfamily. Homodimer. It depends on pyridoxal 5'-phosphate as a cofactor.

The catalysed reaction is L-histidinol phosphate + 2-oxoglutarate = 3-(imidazol-4-yl)-2-oxopropyl phosphate + L-glutamate. The protein operates within amino-acid biosynthesis; L-histidine biosynthesis; L-histidine from 5-phospho-alpha-D-ribose 1-diphosphate: step 7/9. In Pectobacterium carotovorum subsp. carotovorum (strain PC1), this protein is Histidinol-phosphate aminotransferase.